A 484-amino-acid chain; its full sequence is tRNA sulfurtransferase (484 aa).

Positions 63 to 167 (QAFGERLACI…RDNLYMVTKR (105 aa)) constitute a THUMP domain. Residues 185–186 (LI), lysine 267, glycine 289, and glutamine 298 contribute to the ATP site. A disulfide bond links cysteine 346 and cysteine 458. One can recognise a Rhodanese domain in the interval 406–484 (IDTNQVVIDI…GYTNVKVYRP (79 aa)). Cysteine 458 acts as the Cysteine persulfide intermediate in catalysis.

Belongs to the ThiI family.

It localises to the cytoplasm. It carries out the reaction [ThiI sulfur-carrier protein]-S-sulfanyl-L-cysteine + a uridine in tRNA + 2 reduced [2Fe-2S]-[ferredoxin] + ATP + H(+) = [ThiI sulfur-carrier protein]-L-cysteine + a 4-thiouridine in tRNA + 2 oxidized [2Fe-2S]-[ferredoxin] + AMP + diphosphate. The enzyme catalyses [ThiS sulfur-carrier protein]-C-terminal Gly-Gly-AMP + S-sulfanyl-L-cysteinyl-[cysteine desulfurase] + AH2 = [ThiS sulfur-carrier protein]-C-terminal-Gly-aminoethanethioate + L-cysteinyl-[cysteine desulfurase] + A + AMP + 2 H(+). It participates in cofactor biosynthesis; thiamine diphosphate biosynthesis. Catalyzes the ATP-dependent transfer of a sulfur to tRNA to produce 4-thiouridine in position 8 of tRNAs, which functions as a near-UV photosensor. Also catalyzes the transfer of sulfur to the sulfur carrier protein ThiS, forming ThiS-thiocarboxylate. This is a step in the synthesis of thiazole, in the thiamine biosynthesis pathway. The sulfur is donated as persulfide by IscS. This is tRNA sulfurtransferase from Shewanella baltica (strain OS155 / ATCC BAA-1091).